The following is a 289-amino-acid chain: UPF0276 protein BB1291 (289 aa).

This sequence belongs to the UPF0276 family.

In Bordetella bronchiseptica (strain ATCC BAA-588 / NCTC 13252 / RB50) (Alcaligenes bronchisepticus), this protein is UPF0276 protein BB1291.